Here is an 858-residue protein sequence, read N- to C-terminus: MQEQYRPQDIEQKVQEHWDNNKTFVVNEDPNKEKFYCLSMFPYPSGRLHMGHVRNYTIGDVVSRYQRLQGKNVMQPIGWDAFGLPAENAAVKNKTAPAPWTYENIEYMKNQLKLLGFGYDWSREFATCTPEYYRWEQEFFTKLYNKGLVYKKTSSVNWCPNDQTVLANEQVEDGCCWRCDTPVEQKKIPQWFIKITEYAQELLDDLDTLDGWPEMVKTMQRNWIGRSEGVELSFAVNGEEAPLEVYTTRPDTLMGVTYVGIAAGHPLAEKAAATNPELFAFTEECRNTKVAEAELATMEKKGMDTGLRAVHPLNGREVPIYVANFVLMDYGTGAVMAVPAHDQRDYEFATKYGLDIIPVIKPEDGSELNVSEEAYTEKGVLFDSGEFDGLAFQDAFDAIAAKLEAEGKGKKTVNFRLRDWGVSRQRYWGAPIPMVTTEDGEVHPVPADQLPVILPENVVMDGVTSPIKADKEWAKTTFNGEPALRETDTFDTFMESSWYYARYCSPQADDILDPEKANYWLPVDQYVGGIEHACMHLLYSRFFHKLLRDAGYVTSNEPFKQLLCQGMVLADAFHHTNEKGTKEWIAPTDVTIERDAKGRIEKAIDDQGREVQHSGMIKMSKSKNNGIDPQEMVDKFGADTVRLFMMFASPADMTLEWQESGVEGASRFLKRVWKLVHEHTNKGTVEALDVAALSGNQKALRRDVHKTIAKVSDDIGRRQTFNTAIAAIMELMNKLNKAPQESAQDRALLDEALKAVVVMLYPMTPHASFEMWEALGETDIDTATWPTFDKNALIEDEKTIVVMINGKLRAKLIVAADATEEQVKELGLKDENAIKFLDGLTIRKVIYVPGKLLNIVAN.

The short motif at 42 to 52 is the 'HIGH' region element; that stretch reads PYPSGRLHMGH. The 'KMSKS' region motif lies at 618-622; that stretch reads KMSKS. Lysine 621 lines the ATP pocket.

This sequence belongs to the class-I aminoacyl-tRNA synthetase family.

The protein localises to the cytoplasm. The catalysed reaction is tRNA(Leu) + L-leucine + ATP = L-leucyl-tRNA(Leu) + AMP + diphosphate. The chain is Leucine--tRNA ligase from Photobacterium profundum (strain SS9).